The sequence spans 440 residues: uncharacterized protein (440 aa).

Disordered stretches follow at residues 49–81 (CPPAQSHGHSSLRTNLNSSPPRCPQNPGTEPSL) and 162–295 (LPKP…CASE). Residues 55 to 80 (HGHSSLRTNLNSSPPRCPQNPGTEPS) show a composition bias toward polar residues. Basic and acidic residues predominate over residues 249–266 (YREELSNTKSRFSEDKGS). Residues 274-284 (SSNSSEPGLPG) show a composition bias toward low complexity.

This sequence belongs to the tymoviridae protein p69 family.

This is an uncharacterized protein from Erysimum latent virus (ELV).